Here is a 484-residue protein sequence, read N- to C-terminus: Cobyric acid synthase (484 aa).

The GATase cobBQ-type domain occupies 248-435 (VLKVIVPVLP…LHGLFEGSQS (188 aa)). Residue C329 is the Nucleophile of the active site. The active site involves H427.

This sequence belongs to the CobB/CobQ family. CobQ subfamily.

The protein operates within cofactor biosynthesis; adenosylcobalamin biosynthesis. Catalyzes amidations at positions B, D, E, and G on adenosylcobyrinic A,C-diamide. NH(2) groups are provided by glutamine, and one molecule of ATP is hydrogenolyzed for each amidation. In Pseudomonas putida (strain GB-1), this protein is Cobyric acid synthase.